Here is a 29-residue protein sequence, read N- to C-terminus: MDIVSLGWAFLMVVFSFSLSLVVWGRNGL.

The chain crosses the membrane as a helical span at residues 3 to 23 (IVSLGWAFLMVVFSFSLSLVV).

Belongs to the PetN family. The 4 large subunits of the cytochrome b6-f complex are cytochrome b6, subunit IV (17 kDa polypeptide, PetD), cytochrome f and the Rieske protein, while the 4 small subunits are PetG, PetL, PetM and PetN. The complex functions as a dimer.

It localises to the plastid. Its subcellular location is the chloroplast thylakoid membrane. Its function is as follows. Component of the cytochrome b6-f complex, which mediates electron transfer between photosystem II (PSII) and photosystem I (PSI), cyclic electron flow around PSI, and state transitions. The protein is Cytochrome b6-f complex subunit 8 of Chlorokybus atmophyticus (Soil alga).